The following is a 361-amino-acid chain: tRNA/tmRNA (uracil-C(5))-methyltransferase (361 aa).

5 residues coordinate S-adenosyl-L-methionine: Gln-185, Tyr-213, Asn-218, Glu-234, and Asp-294. The Nucleophile role is filled by Cys-319. The active-site Proton acceptor is Glu-353.

It belongs to the class I-like SAM-binding methyltransferase superfamily. RNA M5U methyltransferase family. TrmA subfamily.

The catalysed reaction is uridine(54) in tRNA + S-adenosyl-L-methionine = 5-methyluridine(54) in tRNA + S-adenosyl-L-homocysteine + H(+). It catalyses the reaction uridine(341) in tmRNA + S-adenosyl-L-methionine = 5-methyluridine(341) in tmRNA + S-adenosyl-L-homocysteine + H(+). Dual-specificity methyltransferase that catalyzes the formation of 5-methyluridine at position 54 (m5U54) in all tRNAs, and that of position 341 (m5U341) in tmRNA (transfer-mRNA). The sequence is that of tRNA/tmRNA (uracil-C(5))-methyltransferase from Pseudomonas putida (strain GB-1).